The sequence spans 703 residues: Methionine--tRNA ligase (703 aa).

The short motif at 15 to 25 (PYANGPVHLGH) is the 'HIGH' region element. Zn(2+) is bound by residues cysteine 147, cysteine 150, cysteine 160, and cysteine 163. Residues 345–349 (KFSKS) carry the 'KMSKS' region motif. Residue lysine 348 coordinates ATP. A tRNA-binding domain is found at 602–703 (DFQKIDLRVA…GEGINGNSVS (102 aa)).

This sequence belongs to the class-I aminoacyl-tRNA synthetase family. MetG type 1 subfamily. In terms of assembly, homodimer. Zn(2+) is required as a cofactor.

The protein resides in the cytoplasm. It catalyses the reaction tRNA(Met) + L-methionine + ATP = L-methionyl-tRNA(Met) + AMP + diphosphate. Is required not only for elongation of protein synthesis but also for the initiation of all mRNA translation through initiator tRNA(fMet) aminoacylation. The polypeptide is Methionine--tRNA ligase (Chlorobaculum tepidum (strain ATCC 49652 / DSM 12025 / NBRC 103806 / TLS) (Chlorobium tepidum)).